The chain runs to 647 residues: UvrABC system protein C (647 aa).

Residues 16–95 form the GIY-YIG domain; sequence VEPGVYRFRD…IKEFDPRFNI (80 aa). One can recognise a UVR domain in the interval 208–243; it reads DRYARDLERKMSAAAEQLDFERAARLRDDLFALKRA.

It belongs to the UvrC family. Interacts with UvrB in an incision complex.

It is found in the cytoplasm. The UvrABC repair system catalyzes the recognition and processing of DNA lesions. UvrC both incises the 5' and 3' sides of the lesion. The N-terminal half is responsible for the 3' incision and the C-terminal half is responsible for the 5' incision. The polypeptide is UvrABC system protein C (Mycobacterium leprae (strain Br4923)).